Here is a 571-residue protein sequence, read N- to C-terminus: FAD-binding monooxygenase VdtE (571 aa).

Residues 44-47, 56-57, and Y62 each bind FAD; these read VWYW and DS. 54 to 56 contributes to the NADP(+) binding site; sequence RVD. Residues 187 to 193 and 210 to 211 contribute to the NADP(+) site; these read TGASAVQ and RT.

It belongs to the FAD-binding monooxygenase family. FAD serves as cofactor.

It carries out the reaction 9,10-dihydroxy-7-methoxy-3-(2-oxopropyl)-1H-benzo[g]isochromen-1-one + NADPH + O2 + H(+) = methyl 2-[(3S)-9,10-dihydroxy-7-methoxy-1-oxo-1H,3H,4H-naphtho[2,3-c]pyran-3-yl]acetate + NADP(+) + H2O. It catalyses the reaction (3S)-9,10-dihydroxy-7-methoxy-3-(2-oxopropyl)-1H,3H,4H-naphtho[2,3-c]pyran-1-one + NADPH + O2 + H(+) = semiviriditoxin + NADP(+) + H2O. Its pathway is secondary metabolite biosynthesis. Its function is as follows. FAD-binding monooxygenase; part of the gene cluster that mediates the biosynthesis of viriditoxin, one of the 'classical' secondary metabolites produced by fungi and that has antibacterial activity. The first step is performed by the polyketide synthase VdtA which condenses one acetyl-CoA and 6 malonyl-CoA units to form the heptaketide monomer backbone of viriditoxin. The product of VdtA is then O-methylated on C7 by the O-methyltransferase VdtC. The O-methyl group is important for the stereoselective coupling of the monomers at the final step of viriditoxin biosynthesis. The short-chain dehydrogenase/reductase VdtF then acts as a stereospecific reductase converting the pyrone to dihydropyrone via the reduction of the C3-C4 double bond. The FAD-binding monooxygenase VdtE then converts the ketone group into a methyl-ester group to yield semi-viriditoxin. Finally, the laccase VdtB is involved in dimerization of 2 semi-viriditoxin molecules to yield the final viriditoxin. VdtB is responsible for the regioselective 6,6'-coupling of semi-viriditoxin, which yields (M)-viriditoxin and (P)-viriditoxin at a ratio of 1:2. The non-catalytic carboxylesterase-like protein VdtD affects the stereochemistical outcome of the coupling. The highly reducing polyketide synthase VdtX is not involved in viriditoxin synthesis, but might possibly play a role in the production of additional metabolites not identified yet. This chain is FAD-binding monooxygenase VdtE, found in Byssochlamys spectabilis (Paecilomyces variotii).